A 115-amino-acid chain; its full sequence is Large ribosomal subunit protein bL19 (115 aa).

It belongs to the bacterial ribosomal protein bL19 family.

Functionally, this protein is located at the 30S-50S ribosomal subunit interface and may play a role in the structure and function of the aminoacyl-tRNA binding site. In Finegoldia magna (strain ATCC 29328 / DSM 20472 / WAL 2508) (Peptostreptococcus magnus), this protein is Large ribosomal subunit protein bL19.